Here is a 378-residue protein sequence, read N- to C-terminus: Putative zinc finger protein C09F5.3 (378 aa).

Residues 1–14 (MRKTEKMKRPHNSS) show a composition bias toward basic residues. Disordered stretches follow at residues 1-36 (MRKT…SKSI) and 61-80 (TLSE…NSAP). 2 stretches are compositionally biased toward basic and acidic residues: residues 16–26 (VKQEERADDSH) and 62–71 (LSEHVPEKKP). The segment at 42 to 65 (LKCELCSTVCSSISQLQSHTLSEH) adopts a C2H2-type 1 zinc-finger fold. A C2H2-type 2; degenerate zinc finger spans residues 85–107 (VACQQCEDTFEDFAQFAIHMKSH). The C2H2-type 3; degenerate zinc finger occupies 204–226 (YGCALCATSYPSQLHLITHVQMS). The segment at 231–250 (TFYPPSLPIPTPPSPKSTPK) is disordered. Over residues 235–246 (PSLPIPTPPSPK) the composition is skewed to pro residues. 4 consecutive C2H2-type zinc fingers follow at residues 254-277 (LQCS…LRKH), 284-306 (DKCA…CLRH), 312-334 (HHCP…CAYH), and 355-377 (FVCP…TKIH).

The protein resides in the nucleus. In Caenorhabditis elegans, this protein is Putative zinc finger protein C09F5.3.